The chain runs to 498 residues: MRINPTTSGPGVSTLEGKNLGRIAQIIGPVLDVAFPPGKMPNIYNAFVVKGRDTAGQQINVTCEVQQLLGNNRVRTVAMSATDGLMRGMEVIDTGAPLSVPVGGATLGRIFNVLGEPVDNLGPVDTRTTSPIHRSAPAFIQLDTRLSIFETGIKVVDLLAPYRRGGKIGLFGGAGVGKTVLIMELINNIAKAHGGVSVFGGVGERTREGNDLYMEMKESGVINEQNLAESKVALVYGQMNEPPGARMRVGLTALTMAEYFRDVNEQDVLLFIDNIFRFVQAGSEVSALLGRMPSAVGYQPTLSTEMGSLQERITSTKEGSITSIQAVYVPADDLTDPAPATTFAHLDATTVLSRGLAAKGIYPAVDPLDSTSTMLQPRIVGEEHYETAQRVKQTSQRYKELQDIIAILGLDELSEEDRLTVARARKIERFLSQPFFVAEVFTGSPGKYVGLAETIRGFQLILSGELDGLPEQAFYLVGNIDEATAKAINLEMRSNLKK.

172–179 (GGAGVGKT) provides a ligand contact to ATP.

Belongs to the ATPase alpha/beta chains family. As to quaternary structure, F-type ATPases have 2 components, CF(1) - the catalytic core - and CF(0) - the membrane proton channel. CF(1) has five subunits: alpha(3), beta(3), gamma(1), delta(1), epsilon(1). CF(0) has four main subunits: a(1), b(1), b'(1) and c(9-12).

The protein localises to the plastid. Its subcellular location is the chloroplast thylakoid membrane. It catalyses the reaction ATP + H2O + 4 H(+)(in) = ADP + phosphate + 5 H(+)(out). Functionally, produces ATP from ADP in the presence of a proton gradient across the membrane. The catalytic sites are hosted primarily by the beta subunits. This Saruma henryi (Upright wild ginger) protein is ATP synthase subunit beta, chloroplastic.